The following is a 446-amino-acid chain: MGEGAAGSWYVTRDEVERGSPSRRDGVGAAKEAELRATYCSFIRDVGLRLQLPQVTIATATLLCHRFYLRQSHAKNEWQTVATVCVFLASKIEDTPCPLQRVIIVAYETMYRKDCNAAHRIYQKEVLEKQKELILVGETLLLSTIRFDFNIQHPYEPLKLALKKLGIFQMEVKQVAVNLINDAIRTTLVVQFKPHYIAAGSLYLAAKFNNFRLPSDGKVWWHEFDVAPKQLQAVIQQMTELFMGRNPCSMGPAIRPPPTPSLMERQQVIRPPPTPTLMERQPIIRPLPTPTLMENQHITHSLGAVMRHTHSSIRSLSNNFDREASRSLPLNIPANRKSTVCPARNEGNQSLRMHMGHSNGSDARFEKQYSRGALKADHVYHVVSGQKDLHVTGIRDLVRQKRTFHEVGEHPAPIDKSDTKSWIRKRHGRNVIVFDTKSSSWKKQKL.

The protein belongs to the cyclin family. Cyclin T subfamily.

The sequence is that of Cyclin-T1-1 (CYCT1-1) from Oryza sativa subsp. japonica (Rice).